Consider the following 797-residue polypeptide: Complex I intermediate-associated protein 84, mitochondrial (797 aa).

The transit peptide at 1–69 (MRSHLARNAT…ALCTRTSKRT (69 aa)) directs the protein to the mitochondrion.

It localises to the mitochondrion. In terms of biological role, chaperone protein involved in the assembly of the mitochondrial NADH:ubiquinone oxidoreductase complex (complex I). This chain is Complex I intermediate-associated protein 84, mitochondrial (cia84), found in Neurospora crassa (strain ATCC 24698 / 74-OR23-1A / CBS 708.71 / DSM 1257 / FGSC 987).